Reading from the N-terminus, the 1350-residue chain is Probable serine/threonine-protein kinase irlE (1350 aa).

Asparagine 37 is a glycosylation site (N-linked (GlcNAc...) asparagine). A helical transmembrane segment spans residues 149–169 (FWEILASCYGTISFIKFFNIF). Residues 731–802 (EAELKEKFEI…NIQQNYENQH (72 aa)) are a coiled coil. The span at 761-771 (LKKKNKLKKQK) shows a compositional bias: basic residues. 2 disordered regions span residues 761 to 795 (LKKK…QNIQ) and 807 to 864 (RKFN…TTNS). Residues 772–795 (NQQQQQQAKQQAQQQKQQHQQNIQ) show a composition bias toward low complexity. A compositionally biased stretch (polar residues) spans 809–823 (FNQQTKGRPISPSSI). A compositionally biased stretch (low complexity) spans 824 to 864 (QNQNLNPTLLQNQNQTSNPTPNLESTKKATPTTTTTTTTNS). Positions 903–1166 (KKESNILGRG…LSSVLKHPLF (264 aa)) constitute a Protein kinase domain. ATP is bound by residues 909 to 917 (LGRGSNGTL) and lysine 932. Catalysis depends on aspartate 1034, which acts as the Proton acceptor. Residues 1169-1346 (SLKKIKFLES…KNSIHFSNDT (178 aa)) enclose the KEN domain.

It belongs to the protein kinase superfamily. Ser/Thr protein kinase family.

Its subcellular location is the membrane. The catalysed reaction is L-seryl-[protein] + ATP = O-phospho-L-seryl-[protein] + ADP + H(+). It catalyses the reaction L-threonyl-[protein] + ATP = O-phospho-L-threonyl-[protein] + ADP + H(+). This Dictyostelium discoideum (Social amoeba) protein is Probable serine/threonine-protein kinase irlE (irlE).